Reading from the N-terminus, the 193-residue chain is Peptidyl-tRNA hydrolase (193 aa).

Tyr17 is a binding site for tRNA. The active-site Proton acceptor is His22. Residues Tyr69, Asn71, and Asn117 each coordinate tRNA.

Belongs to the PTH family. In terms of assembly, monomer.

Its subcellular location is the cytoplasm. It catalyses the reaction an N-acyl-L-alpha-aminoacyl-tRNA + H2O = an N-acyl-L-amino acid + a tRNA + H(+). Its function is as follows. Hydrolyzes ribosome-free peptidyl-tRNAs (with 1 or more amino acids incorporated), which drop off the ribosome during protein synthesis, or as a result of ribosome stalling. Functionally, catalyzes the release of premature peptidyl moieties from peptidyl-tRNA molecules trapped in stalled 50S ribosomal subunits, and thus maintains levels of free tRNAs and 50S ribosomes. This is Peptidyl-tRNA hydrolase from Leifsonia xyli subsp. xyli (strain CTCB07).